We begin with the raw amino-acid sequence, 938 residues long: Isoleucine--tRNA ligase (938 aa).

A 'HIGH' region motif is present at residues 58-68 (PYANGSIHIGH). Glu561 serves as a coordination point for L-isoleucyl-5'-AMP. Residues 602–606 (KMSKS) carry the 'KMSKS' region motif. Lys605 contacts ATP. Positions 901, 904, 921, and 924 each coordinate Zn(2+).

This sequence belongs to the class-I aminoacyl-tRNA synthetase family. IleS type 1 subfamily. As to quaternary structure, monomer. The cofactor is Zn(2+).

The protein localises to the cytoplasm. It catalyses the reaction tRNA(Ile) + L-isoleucine + ATP = L-isoleucyl-tRNA(Ile) + AMP + diphosphate. In terms of biological role, catalyzes the attachment of isoleucine to tRNA(Ile). As IleRS can inadvertently accommodate and process structurally similar amino acids such as valine, to avoid such errors it has two additional distinct tRNA(Ile)-dependent editing activities. One activity is designated as 'pretransfer' editing and involves the hydrolysis of activated Val-AMP. The other activity is designated 'posttransfer' editing and involves deacylation of mischarged Val-tRNA(Ile). The protein is Isoleucine--tRNA ligase of Citrobacter koseri (strain ATCC BAA-895 / CDC 4225-83 / SGSC4696).